A 465-amino-acid polypeptide reads, in one-letter code: 6-phospho-beta-glucosidase GmuD (465 aa).

Glu170 (proton donor) is an active-site residue. The active-site Nucleophile is Glu368.

Belongs to the glycosyl hydrolase 1 family.

The catalysed reaction is 6-phospho-beta-D-glucosyl-(1-&gt;4)-D-glucose + H2O = D-glucose 6-phosphate + D-glucose. Its function is as follows. Phospho-beta-D-glucosidase that seems to be involved in the degradation of glucomannan. Is also capable of hydrolyzing aryl-phospho-beta-D-glucosides, although very weakly, and plays only a minor role, if any, in the degradation of these substrates in vivo. The chain is 6-phospho-beta-glucosidase GmuD (gmuD) from Bacillus subtilis (strain 168).